A 319-amino-acid chain; its full sequence is Lipoyl synthase (319 aa).

Positions 1–28 are disordered; it reads MVVLVDTVSSTPVRPRHPEKAARPDALS. The span at 16-28 shows a compositional bias: basic and acidic residues; it reads RHPEKAARPDALS. 7 residues coordinate [4Fe-4S] cluster: Cys-61, Cys-66, Cys-72, Cys-87, Cys-91, Cys-94, and Ser-300. A Radical SAM core domain is found at 73–289; the sequence is WDKKHATFMI…AKTAYAKGFL (217 aa).

This sequence belongs to the radical SAM superfamily. Lipoyl synthase family. [4Fe-4S] cluster serves as cofactor.

Its subcellular location is the cytoplasm. The catalysed reaction is [[Fe-S] cluster scaffold protein carrying a second [4Fe-4S](2+) cluster] + N(6)-octanoyl-L-lysyl-[protein] + 2 oxidized [2Fe-2S]-[ferredoxin] + 2 S-adenosyl-L-methionine + 4 H(+) = [[Fe-S] cluster scaffold protein] + N(6)-[(R)-dihydrolipoyl]-L-lysyl-[protein] + 4 Fe(3+) + 2 hydrogen sulfide + 2 5'-deoxyadenosine + 2 L-methionine + 2 reduced [2Fe-2S]-[ferredoxin]. It functions in the pathway protein modification; protein lipoylation via endogenous pathway; protein N(6)-(lipoyl)lysine from octanoyl-[acyl-carrier-protein]: step 2/2. Functionally, catalyzes the radical-mediated insertion of two sulfur atoms into the C-6 and C-8 positions of the octanoyl moiety bound to the lipoyl domains of lipoate-dependent enzymes, thereby converting the octanoylated domains into lipoylated derivatives. This chain is Lipoyl synthase, found in Rhodopseudomonas palustris (strain HaA2).